A 153-amino-acid chain; its full sequence is MDQAELARIFQMFDRNGDGKITKQELNDSLENLGIYIPDKDLVQMIEKIDLNGDGYVDIEEFGGLYQTIMEERDEEEDMREAFNVFDQNRDGFITVEELRSVLASLGLKQGRTLEDCKRMISKVDVDGDGMVNFKEFKQMMKGGGFAALGSNL.

EF-hand domains are found at residues 1-36 (MDQA…LGIY), 37-72 (IPDK…IMEE), 74-109 (DEEE…LGLK), and 112-147 (RTLE…GGFA). Ca(2+)-binding residues include Asp14, Asn16, Asp18, Lys20, Glu25, Asp50, Asn52, Asp54, Tyr56, Glu61, Asp87, Asn89, Asp91, Glu98, Asp125, Asp127, Asp129, Met131, and Glu136.

This sequence belongs to the calmodulin family.

In terms of biological role, potential calcium sensor. The polypeptide is Calmodulin-like protein 3 (CML3) (Arabidopsis thaliana (Mouse-ear cress)).